The following is an 807-amino-acid chain: Glycerol-3-phosphate acyltransferase (807 aa).

Residues 308-313 carry the HXXXXD motif motif; that stretch reads CHRSHM.

The protein belongs to the GPAT/DAPAT family.

The protein localises to the cell inner membrane. It carries out the reaction sn-glycerol 3-phosphate + an acyl-CoA = a 1-acyl-sn-glycero-3-phosphate + CoA. It functions in the pathway phospholipid metabolism; CDP-diacylglycerol biosynthesis; CDP-diacylglycerol from sn-glycerol 3-phosphate: step 1/3. The sequence is that of Glycerol-3-phosphate acyltransferase from Shewanella baltica (strain OS155 / ATCC BAA-1091).